The primary structure comprises 710 residues: Aminopeptidase P2 (710 aa).

A chloroplast-targeting transit peptide spans 1 to 79 (MIPLTLSSPS…IRKAQTKVVV (79 aa)). Positions 147 and 486 each coordinate a peptide. D506, D517, and H580 together coordinate Mn(2+). The a peptide site is built by H580, H589, and E614. Mn(2+) is bound by residues E614 and E628.

Belongs to the peptidase M24B family. In terms of assembly, homodimer. Requires Mn(2+) as cofactor.

It is found in the plastid. The protein localises to the chloroplast. It catalyses the reaction Release of any N-terminal amino acid, including proline, that is linked to proline, even from a dipeptide or tripeptide.. Its function is as follows. Catalyzes the removal of a penultimate prolyl residue from the N-termini of peptides, such as Arg-Pro-Pro. This Arabidopsis thaliana (Mouse-ear cress) protein is Aminopeptidase P2.